We begin with the raw amino-acid sequence, 489 residues long: Aklavinone 12-hydroxylase DnrF (489 aa).

FAD is bound by residues L17–G18, E37, Q121, and L145. Catalysis depends on Y224, which acts as the Proton acceptor. Residue D308 coordinates FAD. Residue G317 coordinates aklavinone. Disordered stretches follow at residues V402–H428 and E455–N489. Low complexity predominate over residues R468–M482.

The protein belongs to the PheA/TfdB FAD monooxygenase family. As to quaternary structure, monomer. FAD serves as cofactor.

The catalysed reaction is aklavinone + NADPH + O2 + H(+) = epsilon-rhodomycinone + NADP(+) + H2O. The protein operates within antibiotic biosynthesis; daunorubicin biosynthesis. It functions in the pathway antibiotic biosynthesis; carminomycin biosynthesis. Its pathway is antibiotic biosynthesis; rhodomycin biosynthesis. Involved in the biosynthesis of the anthracyclines carminomycin, rhodomycin and daunorubicin (daunomycin) which are aromatic polyketide antibiotics that exhibit high cytotoxicity and are widely applied in the chemotherapy of a variety of cancers. Catalyzes the incorporation of a hydroxyl group at position C-11 of aklavinone, resulting in epsilon-rhodomycinone. It cannot accept substrates glycosylated at position C-7. It can also hydroxylate 11-deoxycarminomycinone and can use both NAD or NADP. In Streptomyces peucetius, this protein is Aklavinone 12-hydroxylase DnrF (dnrF).